A 150-amino-acid chain; its full sequence is D-aminoacyl-tRNA deacylase (150 aa).

The short motif at 138–139 (GP) is the Gly-cisPro motif, important for rejection of L-amino acids element.

It belongs to the DTD family. In terms of assembly, homodimer.

It localises to the cytoplasm. The enzyme catalyses glycyl-tRNA(Ala) + H2O = tRNA(Ala) + glycine + H(+). It carries out the reaction a D-aminoacyl-tRNA + H2O = a tRNA + a D-alpha-amino acid + H(+). In terms of biological role, an aminoacyl-tRNA editing enzyme that deacylates mischarged D-aminoacyl-tRNAs. Also deacylates mischarged glycyl-tRNA(Ala), protecting cells against glycine mischarging by AlaRS. Acts via tRNA-based rather than protein-based catalysis; rejects L-amino acids rather than detecting D-amino acids in the active site. By recycling D-aminoacyl-tRNA to D-amino acids and free tRNA molecules, this enzyme counteracts the toxicity associated with the formation of D-aminoacyl-tRNA entities in vivo and helps enforce protein L-homochirality. This Natranaerobius thermophilus (strain ATCC BAA-1301 / DSM 18059 / JW/NM-WN-LF) protein is D-aminoacyl-tRNA deacylase.